We begin with the raw amino-acid sequence, 272 residues long: Tryptophan synthase alpha chain (272 aa).

Catalysis depends on proton acceptor residues E49 and D60.

Belongs to the TrpA family. In terms of assembly, tetramer of two alpha and two beta chains.

It carries out the reaction (1S,2R)-1-C-(indol-3-yl)glycerol 3-phosphate + L-serine = D-glyceraldehyde 3-phosphate + L-tryptophan + H2O. It functions in the pathway amino-acid biosynthesis; L-tryptophan biosynthesis; L-tryptophan from chorismate: step 5/5. In terms of biological role, the alpha subunit is responsible for the aldol cleavage of indoleglycerol phosphate to indole and glyceraldehyde 3-phosphate. The polypeptide is Tryptophan synthase alpha chain (Hydrogenovibrio crunogenus (strain DSM 25203 / XCL-2) (Thiomicrospira crunogena)).